The sequence spans 466 residues: Cysteine--tRNA ligase (466 aa).

Cys-29 lines the Zn(2+) pocket. The 'HIGH' region motif lies at 31–41 (PTVYNYIHIGN). Cys-209, His-234, and Glu-238 together coordinate Zn(2+). Positions 266–270 (KMSKS) match the 'KMSKS' region motif. Residue Lys-269 participates in ATP binding. Phosphoserine is present on Ser-270.

Belongs to the class-I aminoacyl-tRNA synthetase family. As to quaternary structure, monomer. Zn(2+) is required as a cofactor.

It localises to the cytoplasm. It catalyses the reaction tRNA(Cys) + L-cysteine + ATP = L-cysteinyl-tRNA(Cys) + AMP + diphosphate. The polypeptide is Cysteine--tRNA ligase (Bacillus velezensis (strain DSM 23117 / BGSC 10A6 / LMG 26770 / FZB42) (Bacillus amyloliquefaciens subsp. plantarum)).